A 185-amino-acid chain; its full sequence is Tumor necrosis factor receptor superfamily member 17 (185 aa).

Over 1–49 (MAQQCFHSEYFDSLLHACKPCHLRCSNPPATCQPYCDPSVTSSVKGTYT) the chain is Extracellular. The TNFR-Cys repeat unit spans residues 4-36 (QCFHSEYFDSLLHACKPCHLRCSNPPATCQPYC). Cystine bridges form between Cys-5–Cys-18, Cys-21–Cys-32, and Cys-25–Cys-36. Residues 50–70 (VLWIFLGLTLVLSLALFTISF) form a helical; Signal-anchor for type III membrane protein membrane-spanning segment. Over 71-185 (LLRKMNPEAL…MGMEKPTHTR (115 aa)) the chain is Cytoplasmic.

Associates with TRAF1, TRAF2, TRAF3, TRAF5 and TRAF6. Detected in spleen, thymus, bone marrow and heart, and at lower levels in kidney and lung.

It is found in the membrane. In terms of biological role, receptor for TNFSF13B/BLyS/BAFF and TNFSF13/APRIL. Promotes B-cell survival and plays a role in the regulation of humoral immunity. Activates NF-kappa-B and JNK. In Mus musculus (Mouse), this protein is Tumor necrosis factor receptor superfamily member 17 (Tnfrsf17).